The primary structure comprises 128 residues: Glycine cleavage system H protein (128 aa).

The Lipoyl-binding domain maps to 24–106; that stretch reads VYTVGITEHA…YAEGFLFQIK (83 aa). An N6-lipoyllysine modification is found at lysine 65.

Belongs to the GcvH family. In terms of assembly, the glycine cleavage system is composed of four proteins: P, T, L and H. (R)-lipoate is required as a cofactor.

The glycine cleavage system catalyzes the degradation of glycine. The H protein shuttles the methylamine group of glycine from the P protein to the T protein. The polypeptide is Glycine cleavage system H protein (Serratia proteamaculans (strain 568)).